The sequence spans 185 residues: Ribosome-recycling factor (185 aa).

This sequence belongs to the RRF family.

The protein localises to the cytoplasm. In terms of biological role, responsible for the release of ribosomes from messenger RNA at the termination of protein biosynthesis. May increase the efficiency of translation by recycling ribosomes from one round of translation to another. The sequence is that of Ribosome-recycling factor from Campylobacter jejuni (strain RM1221).